A 227-amino-acid chain; its full sequence is Urease accessory protein UreF (227 aa).

The protein belongs to the UreF family. As to quaternary structure, ureD, UreF and UreG form a complex that acts as a GTP-hydrolysis-dependent molecular chaperone, activating the urease apoprotein by helping to assemble the nickel containing metallocenter of UreC. The UreE protein probably delivers the nickel.

The protein localises to the cytoplasm. In terms of biological role, required for maturation of urease via the functional incorporation of the urease nickel metallocenter. This chain is Urease accessory protein UreF, found in Blochmanniella floridana.